A 125-amino-acid chain; its full sequence is uncharacterized protein (125 aa).

This is an uncharacterized protein from Microplitis demolitor (Parasitoid wasp).